Here is a 142-residue protein sequence, read N- to C-terminus: Large ribosomal subunit protein uL16 (142 aa).

This sequence belongs to the universal ribosomal protein uL16 family. In terms of assembly, part of the 50S ribosomal subunit.

In terms of biological role, binds 23S rRNA and is also seen to make contacts with the A and possibly P site tRNAs. The chain is Large ribosomal subunit protein uL16 from Pseudothermotoga lettingae (strain ATCC BAA-301 / DSM 14385 / NBRC 107922 / TMO) (Thermotoga lettingae).